The following is a 292-amino-acid chain: Large ribosomal subunit protein bL19m (292 aa).

Residues 39–68 (GPGRRQITGPSEPGVFQPPPKPVIVDKRGP) are disordered. Ser-77 carries the phosphoserine modification.

The protein belongs to the bacterial ribosomal protein bL19 family. Component of the mitochondrial ribosome large subunit (39S) which comprises a 16S rRNA and about 50 distinct proteins.

It is found in the mitochondrion. This Bos taurus (Bovine) protein is Large ribosomal subunit protein bL19m (MRPL19).